Consider the following 227-residue polypeptide: Cytochrome c oxidase subunit 2 (227 aa).

Residues 1–14 (MAYPFQLGLQDATS) are Mitochondrial intermembrane-facing. A helical transmembrane segment spans residues 15-45 (PIMEELTNFHDHTLMIVFLISSLVLYIISLM). The Mitochondrial matrix portion of the chain corresponds to 46–59 (LTTKLTHTSTMDAQ). The chain crosses the membrane as a helical span at residues 60–87 (EVETIWTILPAVILILIALPSLRILYMM). Topologically, residues 88–227 (DEINNPVLTV…YFENWSASMI (140 aa)) are mitochondrial intermembrane. The Cu cation site is built by His161, Cys196, Glu198, Cys200, His204, and Met207. Glu198 is a Mg(2+) binding site. Tyr218 carries the post-translational modification Phosphotyrosine.

Belongs to the cytochrome c oxidase subunit 2 family. As to quaternary structure, component of the cytochrome c oxidase (complex IV, CIV), a multisubunit enzyme composed of 14 subunits. The complex is composed of a catalytic core of 3 subunits MT-CO1, MT-CO2 and MT-CO3, encoded in the mitochondrial DNA, and 11 supernumerary subunits COX4I, COX5A, COX5B, COX6A, COX6B, COX6C, COX7A, COX7B, COX7C, COX8 and NDUFA4, which are encoded in the nuclear genome. The complex exists as a monomer or a dimer and forms supercomplexes (SCs) in the inner mitochondrial membrane with NADH-ubiquinone oxidoreductase (complex I, CI) and ubiquinol-cytochrome c oxidoreductase (cytochrome b-c1 complex, complex III, CIII), resulting in different assemblies (supercomplex SCI(1)III(2)IV(1) and megacomplex MCI(2)III(2)IV(2)). Found in a complex with TMEM177, COA6, COX18, COX20, SCO1 and SCO2. Interacts with TMEM177 in a COX20-dependent manner. Interacts with COX20. Interacts with COX16. Requires Cu cation as cofactor.

The protein localises to the mitochondrion inner membrane. The enzyme catalyses 4 Fe(II)-[cytochrome c] + O2 + 8 H(+)(in) = 4 Fe(III)-[cytochrome c] + 2 H2O + 4 H(+)(out). In terms of biological role, component of the cytochrome c oxidase, the last enzyme in the mitochondrial electron transport chain which drives oxidative phosphorylation. The respiratory chain contains 3 multisubunit complexes succinate dehydrogenase (complex II, CII), ubiquinol-cytochrome c oxidoreductase (cytochrome b-c1 complex, complex III, CIII) and cytochrome c oxidase (complex IV, CIV), that cooperate to transfer electrons derived from NADH and succinate to molecular oxygen, creating an electrochemical gradient over the inner membrane that drives transmembrane transport and the ATP synthase. Cytochrome c oxidase is the component of the respiratory chain that catalyzes the reduction of oxygen to water. Electrons originating from reduced cytochrome c in the intermembrane space (IMS) are transferred via the dinuclear copper A center (CU(A)) of subunit 2 and heme A of subunit 1 to the active site in subunit 1, a binuclear center (BNC) formed by heme A3 and copper B (CU(B)). The BNC reduces molecular oxygen to 2 water molecules using 4 electrons from cytochrome c in the IMS and 4 protons from the mitochondrial matrix. The protein is Cytochrome c oxidase subunit 2 (MT-CO2) of Dacnomys millardi (Millard's rat).